The following is a 93-amino-acid chain: Large ribosomal subunit protein uL23 (93 aa).

This sequence belongs to the universal ribosomal protein uL23 family. Part of the 50S ribosomal subunit. Contacts protein L29, and trigger factor when it is bound to the ribosome.

In terms of biological role, one of the early assembly proteins it binds 23S rRNA. One of the proteins that surrounds the polypeptide exit tunnel on the outside of the ribosome. Forms the main docking site for trigger factor binding to the ribosome. This Opitutus terrae (strain DSM 11246 / JCM 15787 / PB90-1) protein is Large ribosomal subunit protein uL23.